A 231-amino-acid polypeptide reads, in one-letter code: Large ribosomal subunit protein uL1 (231 aa).

The protein belongs to the universal ribosomal protein uL1 family. In terms of assembly, part of the 50S ribosomal subunit.

Its function is as follows. Binds directly to 23S rRNA. The L1 stalk is quite mobile in the ribosome, and is involved in E site tRNA release. Protein L1 is also a translational repressor protein, it controls the translation of the L11 operon by binding to its mRNA. This is Large ribosomal subunit protein uL1 from Teredinibacter turnerae (strain ATCC 39867 / T7901).